Consider the following 384-residue polypeptide: Formate-dependent phosphoribosylglycinamide formyltransferase (384 aa).

Residues 14–15 and E74 each bind N(1)-(5-phospho-beta-D-ribosyl)glycinamide; that span reads EL. ATP contacts are provided by residues R106, K147, 152-157, 187-190, and E195; these read SSGKGQ and EEFI. The ATP-grasp domain occupies 111–300; that stretch reads RLAAETLHLP…EFALHVRAVL (190 aa). Mg(2+) is bound by residues E259 and E271. Residues D278, K348, and 355 to 356 contribute to the N(1)-(5-phospho-beta-D-ribosyl)glycinamide site; that span reads RR.

This sequence belongs to the PurK/PurT family. Homodimer.

The catalysed reaction is N(1)-(5-phospho-beta-D-ribosyl)glycinamide + formate + ATP = N(2)-formyl-N(1)-(5-phospho-beta-D-ribosyl)glycinamide + ADP + phosphate + H(+). It functions in the pathway purine metabolism; IMP biosynthesis via de novo pathway; N(2)-formyl-N(1)-(5-phospho-D-ribosyl)glycinamide from N(1)-(5-phospho-D-ribosyl)glycinamide (formate route): step 1/1. Functionally, involved in the de novo purine biosynthesis. Catalyzes the transfer of formate to 5-phospho-ribosyl-glycinamide (GAR), producing 5-phospho-ribosyl-N-formylglycinamide (FGAR). Formate is provided by PurU via hydrolysis of 10-formyl-tetrahydrofolate. In Bacillus velezensis (strain DSM 23117 / BGSC 10A6 / LMG 26770 / FZB42) (Bacillus amyloliquefaciens subsp. plantarum), this protein is Formate-dependent phosphoribosylglycinamide formyltransferase.